The following is a 261-amino-acid chain: Protein-ADP-ribose hydrolase (261 aa).

One can recognise a Macro domain in the interval 74 to 261 (ADLKPVTGRG…DEALYNKLMS (188 aa)). ADP-D-ribose-binding residues include D93, I94, and N107. 3 residues coordinate Zn(2+): C113, H118, and C120. C120, I121, D122, S211, T212, G213, and F215 together coordinate ADP-D-ribose.

The protein belongs to the MacroD-type family. Zn-Macro subfamily. Zn(2+) serves as cofactor.

The catalysed reaction is 4-O-(ADP-D-ribosyl)-L-aspartyl-[protein] + H2O = L-aspartyl-[protein] + ADP-D-ribose + H(+). ADP-ribosylhydrolase that specifically reverses the SirTM-mediated mono-ADP-ribosylation at an asparatate residue of GcvH-L, by releasing ADP-ribose from the target protein. May play a role in the regulation of the response to host-induced oxidative stress. The protein is Protein-ADP-ribose hydrolase of Treponema medium.